Reading from the N-terminus, the 154-residue chain is uncharacterized protein (154 aa).

The protein localises to the mitochondrion. This is an uncharacterized protein from Vicia faba (Broad bean).